The primary structure comprises 210 residues: Large ribosomal subunit protein uL3 (210 aa).

Residues 131–140 (NRASHGNSLS) are compositionally biased toward polar residues. The interval 131–150 (NRASHGNSLSHRAPGSIGCR) is disordered. At glutamine 151 the chain carries N5-methylglutamine.

The protein belongs to the universal ribosomal protein uL3 family. Part of the 50S ribosomal subunit. Forms a cluster with proteins L14 and L19. Methylated by PrmB.

Its function is as follows. One of the primary rRNA binding proteins, it binds directly near the 3'-end of the 23S rRNA, where it nucleates assembly of the 50S subunit. The sequence is that of Large ribosomal subunit protein uL3 from Acidithiobacillus ferrooxidans (strain ATCC 23270 / DSM 14882 / CIP 104768 / NCIMB 8455) (Ferrobacillus ferrooxidans (strain ATCC 23270)).